Consider the following 116-residue polypeptide: MTFEMLYSKIHRATITDANLNYIGSITIDEDLAKLAKLREGMKVEIVDVNNGERFSTYVILGKKRGEICVNGAAARKVAIGDVVIILAYASMNEDEINAHKPCIVLVDEKNEILEK.

Catalysis depends on Ser25, which acts as the Schiff-base intermediate with substrate; via pyruvic acid. Ser25 is subject to Pyruvic acid (Ser). A substrate-binding site is contributed by Thr57. The Proton donor role is filled by Tyr58. Residue 72–74 (GAA) participates in substrate binding.

It belongs to the PanD family. As to quaternary structure, heterooctamer of four alpha and four beta subunits. The cofactor is pyruvate. In terms of processing, is synthesized initially as an inactive proenzyme, which is activated by self-cleavage at a specific serine bond to produce a beta-subunit with a hydroxyl group at its C-terminus and an alpha-subunit with a pyruvoyl group at its N-terminus.

The protein resides in the cytoplasm. The catalysed reaction is L-aspartate + H(+) = beta-alanine + CO2. It participates in cofactor biosynthesis; (R)-pantothenate biosynthesis; beta-alanine from L-aspartate: step 1/1. Functionally, catalyzes the pyruvoyl-dependent decarboxylation of aspartate to produce beta-alanine. In Helicobacter pylori (strain HPAG1), this protein is Aspartate 1-decarboxylase.